Here is a 235-residue protein sequence, read N- to C-terminus: Phosphoribosylaminoimidazole-succinocarboxamide synthase (235 aa).

The protein belongs to the SAICAR synthetase family.

The catalysed reaction is 5-amino-1-(5-phospho-D-ribosyl)imidazole-4-carboxylate + L-aspartate + ATP = (2S)-2-[5-amino-1-(5-phospho-beta-D-ribosyl)imidazole-4-carboxamido]succinate + ADP + phosphate + 2 H(+). It functions in the pathway purine metabolism; IMP biosynthesis via de novo pathway; 5-amino-1-(5-phospho-D-ribosyl)imidazole-4-carboxamide from 5-amino-1-(5-phospho-D-ribosyl)imidazole-4-carboxylate: step 1/2. This Chloroherpeton thalassium (strain ATCC 35110 / GB-78) protein is Phosphoribosylaminoimidazole-succinocarboxamide synthase.